We begin with the raw amino-acid sequence, 199 residues long: Fe/S biogenesis protein NfuA (199 aa).

Residues cysteine 151 and cysteine 154 each coordinate [4Fe-4S] cluster.

Belongs to the NfuA family. In terms of assembly, homodimer. The cofactor is [4Fe-4S] cluster.

Its function is as follows. Involved in iron-sulfur cluster biogenesis. Binds a 4Fe-4S cluster, can transfer this cluster to apoproteins, and thereby intervenes in the maturation of Fe/S proteins. Could also act as a scaffold/chaperone for damaged Fe/S proteins. The chain is Fe/S biogenesis protein NfuA from Xylella fastidiosa (strain M23).